Consider the following 547-residue polypeptide: Chaperonin GroEL 1 (547 aa).

ATP is bound by residues Thr-30–Pro-33, Lys-51, Asp-87–Thr-91, Gly-415, and Asp-496.

Belongs to the chaperonin (HSP60) family. In terms of assembly, forms a cylinder of 14 subunits composed of two heptameric rings stacked back-to-back. Interacts with the co-chaperonin GroES.

Its subcellular location is the cytoplasm. It carries out the reaction ATP + H2O + a folded polypeptide = ADP + phosphate + an unfolded polypeptide.. Together with its co-chaperonin GroES, plays an essential role in assisting protein folding. The GroEL-GroES system forms a nano-cage that allows encapsulation of the non-native substrate proteins and provides a physical environment optimized to promote and accelerate protein folding. This chain is Chaperonin GroEL 1, found in Rhodopseudomonas palustris (strain BisB5).